Consider the following 175-residue polypeptide: Cell division protein SepF (175 aa).

Residues 20–29 are compositionally biased toward acidic residues; it reads RYEDYDDYDD. The disordered stretch occupies residues 20–88; that stretch reads RYEDYDDYDD…ERPTPPLRVT (69 aa). Composition is skewed to basic and acidic residues over residues 30-47 and 54-73; these read AEPH…DLGS and RRMD…RRVS.

Belongs to the SepF family. In terms of assembly, homodimer. Interacts with FtsZ.

It localises to the cytoplasm. In terms of biological role, cell division protein that is part of the divisome complex and is recruited early to the Z-ring. Probably stimulates Z-ring formation, perhaps through the cross-linking of FtsZ protofilaments. Its function overlaps with FtsA. The chain is Cell division protein SepF from Acidothermus cellulolyticus (strain ATCC 43068 / DSM 8971 / 11B).